A 376-amino-acid polypeptide reads, in one-letter code: uncharacterized protein (376 aa).

The protein belongs to the mimivirus R1 family.

This is an uncharacterized protein from Acanthamoeba polyphaga (Amoeba).